The sequence spans 262 residues: uncharacterized protein (262 aa).

The a divalent metal cation site is built by H7, H9, E98, H138, H162, and D212.

It belongs to the metallo-dependent hydrolases superfamily. TatD-type hydrolase family. It depends on a divalent metal cation as a cofactor.

This is an uncharacterized protein from Haemophilus influenzae (strain ATCC 51907 / DSM 11121 / KW20 / Rd).